Consider the following 309-residue polypeptide: Ribosomal RNA small subunit methyltransferase H (309 aa).

Residues 33 to 35, Asp-53, Phe-79, Asp-100, and Gln-107 each bind S-adenosyl-L-methionine; that span reads GGH.

This sequence belongs to the methyltransferase superfamily. RsmH family.

The protein resides in the cytoplasm. It catalyses the reaction cytidine(1402) in 16S rRNA + S-adenosyl-L-methionine = N(4)-methylcytidine(1402) in 16S rRNA + S-adenosyl-L-homocysteine + H(+). In terms of biological role, specifically methylates the N4 position of cytidine in position 1402 (C1402) of 16S rRNA. The sequence is that of Ribosomal RNA small subunit methyltransferase H from Clostridium botulinum (strain Kyoto / Type A2).